The primary structure comprises 206 residues: Transmembrane 4 L6 family member 19 (206 aa).

Topologically, residues 1–16 are cytoplasmic; it reads MLSFSRVVNCSRTCSR. Residues 17 to 37 traverse the membrane as a helical segment; it reads FLGLSLGTASLCAAGANIALL. At 38–54 the chain is on the extracellular side; that stretch reads FPNWDVTYLMRGLIGKH. The helical transmembrane segment at 55-75 threads the bilayer; that stretch reads AMLGSGLWGGGLMVLLAATLI. The Cytoplasmic segment spans residues 76–89; the sequence is SMTGSFSKSAPCLQ. A helical membrane pass occupies residues 90-110; sequence VLIALLSSGLALLGAVICFVT. The Extracellular portion of the chain corresponds to 111–171; it reads SGVALKDGPF…PSKAVVWHVA (61 aa). The N-linked (GlcNAc...) asparagine glycan is linked to N129. The chain crosses the membrane as a helical span at residues 172 to 192; the sequence is FFSILLCISLLQLLLVAIHLV. Residues 182 to 192 are important for homodimerization; the sequence is LQLLLVAIHLV. Residues 193–206 lie on the Cytoplasmic side of the membrane; it reads NSILGLFCSFCEKH.

This sequence belongs to the L6 tetraspanin family. May form homodimers and homooligomers. Interacts with integrins ITGAV and ITGB3. Interacts with components of members of the V0 complex of vacuolar(H+)-ATPase (V-ATPase), including ATP6V0B and ATP6V0D2; this interaction inhibits V1-V0 complex assembly. Predominantly expressed in osteoclasts (at protein level). Also expressed in white adipose tissue, as well as in bone marrow-derived macrophages.

It is found in the lysosome membrane. The protein localises to the cytoplasm. It localises to the cytoskeleton. Its subcellular location is the cell projection. The protein resides in the filopodium. Its function is as follows. Negatively regulates vacuolar (H+)-ATPase (V-ATPase) activity by interacting with members of V-ATPase V0 complex and hence inhibiting V1-V0 assembly. Required for multinucleation during osteoclast differentiation. This chain is Transmembrane 4 L6 family member 19 (Tm4sf19), found in Mus musculus (Mouse).